A 531-amino-acid polypeptide reads, in one-letter code: Peptide chain release factor 3 (531 aa).

The tr-type G domain occupies Arg10 to Lys278. Residues Ser19–Thr26, Asp87–His91, and Asn141–Asp144 each bind GTP.

This sequence belongs to the TRAFAC class translation factor GTPase superfamily. Classic translation factor GTPase family. PrfC subfamily.

It localises to the cytoplasm. Its function is as follows. Increases the formation of ribosomal termination complexes and stimulates activities of RF-1 and RF-2. It binds guanine nucleotides and has strong preference for UGA stop codons. It may interact directly with the ribosome. The stimulation of RF-1 and RF-2 is significantly reduced by GTP and GDP, but not by GMP. The polypeptide is Peptide chain release factor 3 (Neisseria gonorrhoeae (strain ATCC 700825 / FA 1090)).